The following is a 482-amino-acid chain: U2 small nuclear ribonucleoprotein auxiliary factor 35 kDa subunit-related protein 2 (482 aa).

The segment at 1-59 is disordered; it reads MAAPEKMTFPEKPSHKKYRAALKKEKRKKRRQELARLRDSGLSQKEEEEDTFIEEQQLE. The span at 14–31 shows a compositional bias: basic residues; that stretch reads SHKKYRAALKKEKRKKRR. Lys45 participates in a covalent cross-link: Glycyl lysine isopeptide (Lys-Gly) (interchain with G-Cter in SUMO2). Acidic residues predominate over residues 46–58; sequence EEEEDTFIEEQQL. Lys62 participates in a covalent cross-link: Glycyl lysine isopeptide (Lys-Gly) (interchain with G-Cter in SUMO2). A disordered region spans residues 115-135; sequence QRKEREEEEQKRQEKKEKEEA. The C3H1-type 1 zinc finger occupies 166-194; that stretch reads EKDRANCPFYSKTGACRFGDRCSRKHNFP. In terms of domain architecture, RRM spans 198–304; that stretch reads PTLLIKSMFT…RQLQCEFCPV (107 aa). The C3H1-type 2 zinc-finger motif lies at 306–333; it reads RWKMAICGLFEIQQCPRGKHCNFLHVFR. Ser349 is modified (phosphoserine). A disordered region spans residues 351 to 482; the sequence is DRTGSSFGKN…DRTVQSPKSK (132 aa). 2 stretches are compositionally biased toward basic and acidic residues: residues 360–375 and 383–398; these read NSER…DYYS and PSPD…SERK. Phosphoserine is present on Ser384. The segment covering 399–412 has biased composition (basic residues); that stretch reads SSRHRGKKSHKRTS. Positions 413 to 435 are enriched in basic and acidic residues; sequence KSRERHNSRSRGRNRDRSRDRSR. Positions 436 to 454 are enriched in basic residues; it reads GRGSRSRSRSRSRRSRRSR.

Component of the U11/U12 snRNPs that are part of the U12-type spliceosome. Interacts (via RS domain) with SRSF1 and SRSF2. Interacts with U2AF2/U2AF65. Phosphorylated in the RS domain by SRPK1. As to expression, widely expressed.

The protein localises to the nucleus. Its function is as follows. Pre-mRNA-binding protein required for splicing of both U2- and U12-type introns. Selectively interacts with the 3'-splice site of U2- and U12-type pre-mRNAs and promotes different steps in U2 and U12 intron splicing. Recruited to U12 pre-mRNAs in an ATP-dependent manner and is required for assembly of the pre-spliceosome, a precursor to other spliceosomal complexes. For U2-type introns, it is selectively and specifically required for the second step of splicing. This is U2 small nuclear ribonucleoprotein auxiliary factor 35 kDa subunit-related protein 2 (ZRSR2) from Homo sapiens (Human).